The primary structure comprises 324 residues: Adenine deaminase (324 aa).

Residues H11, H13, and H189 each coordinate Zn(2+). E192 (proton donor) is an active-site residue. D270 contributes to the Zn(2+) binding site. D271 lines the substrate pocket.

It belongs to the metallo-dependent hydrolases superfamily. Adenosine and AMP deaminases family. Adenine deaminase type 2 subfamily. Requires Zn(2+) as cofactor.

It catalyses the reaction adenine + H2O + H(+) = hypoxanthine + NH4(+). Its function is as follows. Catalyzes the hydrolytic deamination of adenine to hypoxanthine. Plays an important role in the purine salvage pathway and in nitrogen catabolism. The chain is Adenine deaminase from Sinorhizobium fredii (strain NBRC 101917 / NGR234).